The sequence spans 154 residues: Myoglobin (154 aa).

Residues 2-148 (VLTDAEWHLV…FRKDIAAKYK (147 aa)) enclose the Globin domain. His65 contacts nitrite. His65 is an O2 binding site. Position 68 is a phosphothreonine (Thr68). Heme b is bound at residue His94.

It belongs to the globin family. Monomeric.

The protein localises to the cytoplasm. The protein resides in the sarcoplasm. It catalyses the reaction Fe(III)-heme b-[protein] + nitric oxide + H2O = Fe(II)-heme b-[protein] + nitrite + 2 H(+). The enzyme catalyses H2O2 + AH2 = A + 2 H2O. Functionally, monomeric heme protein which primary function is to store oxygen and facilitate its diffusion within muscle tissues. Reversibly binds oxygen through a pentacoordinated heme iron and enables its timely and efficient release as needed during periods of heightened demand. Depending on the oxidative conditions of tissues and cells, and in addition to its ability to bind oxygen, it also has a nitrite reductase activity whereby it regulates the production of bioactive nitric oxide. Under stress conditions, like hypoxia and anoxia, it also protects cells against reactive oxygen species thanks to its pseudoperoxidase activity. This is Myoglobin (MB) from Balaenoptera physalus (Fin whale).